The following is a 178-amino-acid chain: uncharacterized protein (178 aa).

A disordered region spans residues 152 to 178 (KKLKGAEPKEHQAPNFEPPTEIFPESN).

It belongs to the EUO family.

This is an uncharacterized protein from Chlamydia pneumoniae (Chlamydophila pneumoniae).